The primary structure comprises 74 residues: Mitochondrial import receptor subunit TOM6 homolog (74 aa).

Polar residues predominate over residues 1-16 (MASSTVPVSAAGSANE). Residues 1–22 (MASSTVPVSAAGSANETPEIPD) form a disordered region. Ala-2 bears the N-acetylalanine mark.

It belongs to the Tom6 family. As to quaternary structure, forms part of the preprotein translocase complex of the outer mitochondrial membrane (TOM complex) which consists of at least 7 different proteins (TOMM5, TOMM6, TOMM7, TOMM20, TOMM22, TOMM40 and TOMM70).

The protein localises to the mitochondrion outer membrane. This chain is Mitochondrial import receptor subunit TOM6 homolog (TOMM6), found in Homo sapiens (Human).